The chain runs to 54 residues: Large ribosomal subunit protein bL32c (54 aa).

The protein belongs to the bacterial ribosomal protein bL32 family.

It localises to the plastid. The protein resides in the chloroplast. The protein is Large ribosomal subunit protein bL32c of Cucumis sativus (Cucumber).